The sequence spans 198 residues: Holliday junction branch migration complex subunit RuvA (198 aa).

The interval 1–64 is domain I; it reads MYEYIKGEYM…EDFIGLYGFE (64 aa). Positions 65-143 are domain II; that stretch reads SLEELEMFKM…TDELLNCIDE (79 aa). Residues 144 to 154 are flexible linker; the sequence is FDDVTQDNSLA. The interval 154–198 is domain III; sequence AVSEALSALISLGYTEKEAEKVLRDVDKSESVENIIKSALVKLMG.

The protein belongs to the RuvA family. In terms of assembly, homotetramer. Forms an RuvA(8)-RuvB(12)-Holliday junction (HJ) complex. HJ DNA is sandwiched between 2 RuvA tetramers; dsDNA enters through RuvA and exits via RuvB. An RuvB hexamer assembles on each DNA strand where it exits the tetramer. Each RuvB hexamer is contacted by two RuvA subunits (via domain III) on 2 adjacent RuvB subunits; this complex drives branch migration. In the full resolvosome a probable DNA-RuvA(4)-RuvB(12)-RuvC(2) complex forms which resolves the HJ.

It localises to the cytoplasm. Its function is as follows. The RuvA-RuvB-RuvC complex processes Holliday junction (HJ) DNA during genetic recombination and DNA repair, while the RuvA-RuvB complex plays an important role in the rescue of blocked DNA replication forks via replication fork reversal (RFR). RuvA specifically binds to HJ cruciform DNA, conferring on it an open structure. The RuvB hexamer acts as an ATP-dependent pump, pulling dsDNA into and through the RuvAB complex. HJ branch migration allows RuvC to scan DNA until it finds its consensus sequence, where it cleaves and resolves the cruciform DNA. This Clostridium botulinum (strain Eklund 17B / Type B) protein is Holliday junction branch migration complex subunit RuvA.